The primary structure comprises 685 residues: Glycine--tRNA ligase beta subunit (685 aa).

This sequence belongs to the class-II aminoacyl-tRNA synthetase family. In terms of assembly, tetramer of two alpha and two beta subunits.

Its subcellular location is the cytoplasm. The enzyme catalyses tRNA(Gly) + glycine + ATP = glycyl-tRNA(Gly) + AMP + diphosphate. The sequence is that of Glycine--tRNA ligase beta subunit from Leuconostoc mesenteroides subsp. mesenteroides (strain ATCC 8293 / DSM 20343 / BCRC 11652 / CCM 1803 / JCM 6124 / NCDO 523 / NBRC 100496 / NCIMB 8023 / NCTC 12954 / NRRL B-1118 / 37Y).